Consider the following 574-residue polypeptide: Interleukin-1 receptor-like 2 (574 aa).

The N-terminal stretch at 1 to 21 is a signal peptide; the sequence is MGVTSLLFCGVFFLLLLFVAA. Residues 22–338 are Extracellular-facing; the sequence is DTCEDIFMHN…ILIYPVPDFR (317 aa). Ig-like C2-type domains lie at 25–113, 132–215, and 225–321; these read EDIF…VNLT, PDVY…IRNY, and YGRR…TCHA. N-linked (GlcNAc...) asparagine glycans are attached at residues Asn43, Asn55, and Asn111. Cys44 and Cys97 are disulfide-bonded. Cys149 and Cys199 are joined by a disulfide. 6 N-linked (GlcNAc...) asparagine glycosylation sites follow: Asn231, Asn237, Asn253, Asn269, Asn290, and Asn302. Cys252 and Cys319 are disulfide-bonded. The helical transmembrane segment at 339–359 threads the bilayer; the sequence is AYLLGGLMAFLLLVVSVLFIY. Topologically, residues 360–574 are cytoplasmic; it reads NSFKIDIMLW…CNAATGLITP (215 aa). The 156-residue stretch at 384-539 folds into the TIR domain; it reads KLYDAYVLYP…KFWKKVRYHM (156 aa). Glu470 is an active-site residue.

Belongs to the interleukin-1 receptor family. In terms of assembly, interacts with IL1RAP; the association is enhanced by IL36B indicative for an functional signaling complex and inhibited by IL36RN. As to expression, expressed in bone marrow-derived dendritic cells, splenic CD4(+) T-cells, bone marrow-derived macrophages and bone marrow-derived neutrophils.

It localises to the membrane. The catalysed reaction is NAD(+) + H2O = ADP-D-ribose + nicotinamide + H(+). Receptor for interleukin-36 (IL36A, IL36B and IL36G). After binding to interleukin-36 associates with the coreceptor IL1RAP to form the interleukin-36 receptor complex which mediates interleukin-36-dependent activation of NF-kappa-B, MAPK and other pathways. The IL-36 signaling system is thought to be present in epithelial barriers and to take part in local inflammatory response; it is similar to the IL-1 system. Seems to be involved in skin inflammatory response by induction of the IL-23/IL-17/IL-22 pathway. The protein is Interleukin-1 receptor-like 2 (Il1rl2) of Mus musculus (Mouse).